A 179-amino-acid polypeptide reads, in one-letter code: Large ribosomal subunit protein uL5 (179 aa).

This sequence belongs to the universal ribosomal protein uL5 family. As to quaternary structure, part of the 50S ribosomal subunit; part of the 5S rRNA/L5/L18/L25 subcomplex. Contacts the 5S rRNA and the P site tRNA. Forms a bridge to the 30S subunit in the 70S ribosome.

Functionally, this is one of the proteins that bind and probably mediate the attachment of the 5S RNA into the large ribosomal subunit, where it forms part of the central protuberance. In the 70S ribosome it contacts protein S13 of the 30S subunit (bridge B1b), connecting the 2 subunits; this bridge is implicated in subunit movement. Contacts the P site tRNA; the 5S rRNA and some of its associated proteins might help stabilize positioning of ribosome-bound tRNAs. This is Large ribosomal subunit protein uL5 from Prochlorococcus marinus (strain AS9601).